We begin with the raw amino-acid sequence, 363 residues long: Putative agmatine deiminase (363 aa).

Positions 1–10 (MTKQLSTSPK) are enriched in polar residues. The disordered stretch occupies residues 1 to 20 (MTKQLSTSPKQDGFRMPAEH). Residue Cys355 is the Amidino-cysteine intermediate of the active site.

The protein belongs to the agmatine deiminase family.

It carries out the reaction agmatine + H2O = N-carbamoylputrescine + NH4(+). The polypeptide is Putative agmatine deiminase (Photobacterium profundum (strain SS9)).